A 312-amino-acid chain; its full sequence is Olfactory receptor 7D4 (312 aa).

Residues 1 to 25 lie on the Extracellular side of the membrane; it reads MEAENLTELSKFLLLGLSDDPELQP. Asn5 is a glycosylation site (N-linked (GlcNAc...) asparagine). A helical transmembrane segment spans residues 26-46; that stretch reads VLFGLFLSMYLVTVLGNLLII. The Cytoplasmic segment spans residues 47-54; the sequence is LAVSSDSH. A helical transmembrane segment spans residues 55 to 75; sequence LHTPMYFFLSNLSFVDICFIS. Topologically, residues 76–99 are extracellular; the sequence is TTVPKMLVSIQARSKDISYMGCLT. Cys97 and Cys189 are disulfide-bonded. The chain crosses the membrane as a helical span at residues 100–120; the sequence is QVYFLMMFAGMDTFLLAVMAY. At 121–139 the chain is on the cytoplasmic side; that stretch reads DRFVAICHPLHYTVIMNPC. Residues 140–160 traverse the membrane as a helical segment; sequence LCGLLVLASWFIIFWFSLVHI. At 161–197 the chain is on the extracellular side; the sequence is LLMKRLTFSTGTEIPHFFCEPAQVLKVACSNTLLNNI. The chain crosses the membrane as a helical span at residues 198-217; the sequence is VLYVATALLGVFPVAGILFS. At 218–237 the chain is on the cytoplasmic side; it reads YSQIVSSLMGMSSTKGKYKA. The helical transmembrane segment at 238 to 258 threads the bilayer; the sequence is FSTCGSHLCVVSLFYGTGLGV. Topologically, residues 259-271 are extracellular; that stretch reads YLSSAVTHSSQSS. The chain crosses the membrane as a helical span at residues 272–292; sequence STASVMYAMVTPMLNPFIYSL. Residues 293–312 lie on the Cytoplasmic side of the membrane; it reads RNKDVKGALERLLSRADSCP.

This sequence belongs to the G-protein coupled receptor 1 family. In terms of tissue distribution, nasal olfactory epithelium.

The protein localises to the cell membrane. Odorant receptor. Selectively activated by androstenone and the related odorous steroid androstadienone. The sequence is that of Olfactory receptor 7D4 (OR7D4) from Homo sapiens (Human).